The following is a 652-amino-acid chain: Vitrin (652 aa).

The first 26 residues, Met-1 to Ser-26, serve as a signal peptide directing secretion. In terms of domain architecture, LCCL spans Thr-40–Phe-133. 2 disulfide bridges follow: Cys-46-Cys-62 and Cys-66-Cys-86. Disordered stretches follow at residues Glu-137–Pro-181 and Thr-196–Leu-231. Residues Thr-145–Pro-158 are compositionally biased toward low complexity. Positions Thr-196–Ser-212 are enriched in polar residues. VWFA domains lie at Asp-267–Val-452 and Asp-469–Val-638. Asn-494 carries N-linked (GlcNAc...) asparagine glycosylation.

As to quaternary structure, binds dermatan sulfate and chondroitin sulfate.

The protein resides in the secreted. It is found in the extracellular space. The protein localises to the extracellular matrix. Functionally, promotes matrix assembly and cell adhesiveness. Plays a role in spinal cord formation by regulating the proliferation and differentiation of neural stem cells. The chain is Vitrin (VIT) from Bos taurus (Bovine).